A 166-amino-acid chain; its full sequence is Alanine racemase (166 aa).

Tyr62 (proton acceptor; specific for L-alanine) is an active-site residue. Met110 contributes to the substrate binding site.

Belongs to the alanine racemase family. It depends on pyridoxal 5'-phosphate as a cofactor.

The catalysed reaction is L-alanine = D-alanine. The protein operates within amino-acid biosynthesis; D-alanine biosynthesis; D-alanine from L-alanine: step 1/1. Its function is as follows. Catalyzes the interconversion of L-alanine and D-alanine. May also act on other amino acids. The chain is Alanine racemase (alr) from Piscirickettsia salmonis.